The following is a 61-amino-acid chain: Large ribosomal subunit protein uL30 (61 aa).

Belongs to the universal ribosomal protein uL30 family. In terms of assembly, part of the 50S ribosomal subunit.

The sequence is that of Large ribosomal subunit protein uL30 from Colwellia psychrerythraea (strain 34H / ATCC BAA-681) (Vibrio psychroerythus).